We begin with the raw amino-acid sequence, 266 residues long: Glutamate racemase (266 aa).

Residues 9-10 (DS) and 41-42 (YG) each bind substrate. Catalysis depends on Cys-73, which acts as the Proton donor/acceptor. 74 to 75 (NT) is a substrate binding site. Cys-183 functions as the Proton donor/acceptor in the catalytic mechanism. 184–185 (TH) contributes to the substrate binding site.

The protein belongs to the aspartate/glutamate racemases family.

It catalyses the reaction L-glutamate = D-glutamate. The protein operates within cell wall biogenesis; peptidoglycan biosynthesis. Functionally, provides the (R)-glutamate required for cell wall biosynthesis. The sequence is that of Glutamate racemase from Shewanella woodyi (strain ATCC 51908 / MS32).